Here is a 383-residue protein sequence, read N- to C-terminus: tRNA-specific 2-thiouridylase MnmA (383 aa).

Residues 30 to 37 and methionine 56 contribute to the ATP site; that span reads GMSGGVDS. An interaction with target base in tRNA region spans residues 116-118; sequence NPD. Residue cysteine 121 is the Nucleophile of the active site. Cysteine 121 and cysteine 218 are joined by a disulfide. Position 146 (glycine 146) interacts with ATP. The interaction with tRNA stretch occupies residues 168–170; the sequence is KDQ. The active-site Cysteine persulfide intermediate is the cysteine 218. An interaction with tRNA region spans residues 330–331; it reads RY.

This sequence belongs to the MnmA/TRMU family.

Its subcellular location is the cytoplasm. The catalysed reaction is S-sulfanyl-L-cysteinyl-[protein] + uridine(34) in tRNA + AH2 + ATP = 2-thiouridine(34) in tRNA + L-cysteinyl-[protein] + A + AMP + diphosphate + H(+). In terms of biological role, catalyzes the 2-thiolation of uridine at the wobble position (U34) of tRNA, leading to the formation of s(2)U34. In Haemophilus influenzae (strain 86-028NP), this protein is tRNA-specific 2-thiouridylase MnmA.